The primary structure comprises 162 residues: Nitrogen regulatory protein (162 aa).

Residues 12-156 enclose the PTS EIIA type-2 domain; sequence NVLNQECTRS…EELYEIITEA (145 aa). His-73 functions as the Tele-phosphohistidine intermediate in the catalytic mechanism.

Its subcellular location is the cytoplasm. In terms of biological role, seems to have a role in regulating nitrogen assimilation. The chain is Nitrogen regulatory protein (ptsN) from Klebsiella oxytoca.